The following is a 283-amino-acid chain: Probable endonuclease 4 (283 aa).

His69, His109, Glu144, Asp178, His181, His215, Asp228, His230, and Glu260 together coordinate Zn(2+).

The protein belongs to the AP endonuclease 2 family. It depends on Zn(2+) as a cofactor.

The enzyme catalyses Endonucleolytic cleavage to 5'-phosphooligonucleotide end-products.. Endonuclease IV plays a role in DNA repair. It cleaves phosphodiester bonds at apurinic or apyrimidinic (AP) sites, generating a 3'-hydroxyl group and a 5'-terminal sugar phosphate. The sequence is that of Probable endonuclease 4 from Thermosipho melanesiensis (strain DSM 12029 / CIP 104789 / BI429).